Here is a 204-residue protein sequence, read N- to C-terminus: Guanylate kinase (204 aa).

The Guanylate kinase-like domain maps to 18 to 196 (PKLFTISAPA…SYEILKSIFI (179 aa)). Residue 25–32 (APAGAGKT) coordinates ATP.

It belongs to the guanylate kinase family.

It is found in the cytoplasm. It catalyses the reaction GMP + ATP = GDP + ADP. Functionally, essential for recycling GMP and indirectly, cGMP. This chain is Guanylate kinase, found in Chlamydia felis (strain Fe/C-56) (Chlamydophila felis).